Consider the following 546-residue polypeptide: Chaperonin GroEL (546 aa).

Residues 29–32 (TMGP), K50, 86–90 (DGTTT), G414, and D492 each bind ATP.

Belongs to the chaperonin (HSP60) family. As to quaternary structure, forms a cylinder of 14 subunits composed of two heptameric rings stacked back-to-back. Interacts with the co-chaperonin GroES.

It is found in the cytoplasm. The enzyme catalyses ATP + H2O + a folded polypeptide = ADP + phosphate + an unfolded polypeptide.. Its function is as follows. Together with its co-chaperonin GroES, plays an essential role in assisting protein folding. The GroEL-GroES system forms a nano-cage that allows encapsulation of the non-native substrate proteins and provides a physical environment optimized to promote and accelerate protein folding. The sequence is that of Chaperonin GroEL from Helicobacter pylori (strain Shi470).